We begin with the raw amino-acid sequence, 204 residues long: Glideosome-associated protein 45 (204 aa).

Positions 1 to 86 (MGNKCSRSKV…KEEIDYATQE (86 aa)) are disordered. Glycine 2 carries the N-myristoyl glycine lipid modification. The interval 2-29 (GNKCSRSKVKEPKRKDIDELAERENLKK) is targets GAP45 to the cell membrane; however, dispensable for the formation of the glideosome complex and the association with the inner membrane complex. The segment covering 9–53 (KVKEPKRKDIDELAERENLKKQSEEIIEEKPEEVVEQVEETHEEP) has biased composition (basic and acidic residues). Acidic residues predominate over residues 54 to 73 (LEQEQELDEQKIEEEEEEPE). A Phosphoserine; by CPK10 modification is found at serine 89. At serine 103 the chain carries Phosphoserine; by CPK10 and PKB. Phosphoserine; by CPK10 is present on serine 149.

In terms of assembly, component of the glideosome complex composed of GAP50, GAP45, MTIP and MyoA; the complex is formed during the late schizont stage and in merozoites. MyoA, MTIP and GAP45 probably form an initial complex in the cytoplasm which is then recruited to the outer face of the inner membrane complex via the interaction with GAP50. Interacts with GAP50; the interaction is independent of GAP45 phosphorylation status and can also occur independently of the formation of the glideosome complex. In terms of processing, phosphorylated at multiple sites. Phosphorylation increases during the schizont stage and peaks in segmented merozoites. May be phosphorylated by PKB. In schizonts, phosphorylated at Ser-89 and Ser-149 in response to phospholipase C-mediated calcium release. Phosphorylation at Ser-149 begins in early schizonts while phosphorylation at Ser-103 begins in late schizonts. Phosphorylation at Ser-89, Ser-103 and Ser-149 appears to be dispensable for GAP45 inner membrane complex localization or GAP45 inclusion in the glideosome complex. Phosphorylation is not required for interaction with GAP50; however, it may regulate the interaction with MTIP and MyoA. Post-translationally, N-myristoylated by NMT. N-myristoylation may contribute to the targeting of GAP45 to the inner membrane complex with the subsequent palmitoylation strengthening the interaction with the membrane. Palmitoylated. Palmitoylation appears to follow N-myristoylation and may strengthen the interaction with the inner membrane complex.

The protein resides in the inner membrane complex. Component of the glideosome complex, an inner membrane complex structure involved in parasite gliding motility and host cell invasion. During the asexual blood stage, required in schizonts to recruit MTIP and MyoA to the inner membrane complex where they assemble with GAP50 to form the glideosome complex. By regulating the formation of the glideosome, plays an essential role during merozoite invasion of host erythrocytes. The chain is Glideosome-associated protein 45 from Plasmodium falciparum (isolate 3D7).